A 238-amino-acid chain; its full sequence is Valine-rich protein (238 aa).

A signal peptide spans 1–16; it reads MQAVLLVVALFGAALA.

In terms of tissue distribution, prismatic layer of shell (at protein level). Expressed primarily in the mantle with highest level in the mantle edge and lower level in the mantle pallium.

The protein resides in the secreted. This is Valine-rich protein from Pinctada maxima (Silver-lipped pearl oyster).